A 123-amino-acid polypeptide reads, in one-letter code: UPF0299 membrane protein VV1471 (123 aa).

Transmembrane regions (helical) follow at residues 8-28 (LFGLVVSFGLIFLALTIGSGI), 35-55 (SVPGSVIGMLVLFVSMAIGLV), 71-91 (MILLFVPISVGLMEHFDMLIA), and 94-114 (LPIIASAIGGSLIVLVSLGWL).

This sequence belongs to the UPF0299 family.

It localises to the cell inner membrane. This Vibrio vulnificus (strain YJ016) protein is UPF0299 membrane protein VV1471.